A 162-amino-acid polypeptide reads, in one-letter code: Large ribosomal subunit protein uL30 (162 aa).

The protein belongs to the universal ribosomal protein uL30 family. In terms of assembly, part of the 50S ribosomal subunit.

The protein is Large ribosomal subunit protein uL30 of Korarchaeum cryptofilum (strain OPF8).